We begin with the raw amino-acid sequence, 490 residues long: Pentatricopeptide repeat-containing protein At2g20710, mitochondrial (490 aa).

A mitochondrion-targeting transit peptide spans 1–86 (MKHLLLLRLV…IKMLRKFSRF (86 aa)). PPR repeat units lie at residues 138 to 172 (NYHL…GFLK), 173 to 207 (GCLP…TVKP), 208 to 243 (DIFT…GLHL), 244 to 274 (DWRT…SEQM), 280 to 310 (RKHA…YKEL), 314 to 344 (YNTG…WEAG), 349 to 379 (DIRI…LVQK), and 384 to 421 (DTST…GWRP).

It belongs to the PPR family. P subfamily.

It localises to the mitochondrion. In Arabidopsis thaliana (Mouse-ear cress), this protein is Pentatricopeptide repeat-containing protein At2g20710, mitochondrial.